We begin with the raw amino-acid sequence, 499 residues long: Probable alpha-L-arabinofuranosidase B (499 aa).

The signal sequence occupies residues 1 to 17; that stretch reads MFSRRNLLALGLAATVS. The catalytic stretch occupies residues 18-335; the sequence is AGPCDIYEAG…ENIVAAKYVV (318 aa). Intrachain disulfides connect Cys-21/Cys-31, Cys-81/Cys-86, and Cys-176/Cys-177. Asn-83 carries an N-linked (GlcNAc...) asparagine glycan. N-linked (GlcNAc...) asparagine glycosylation occurs at Asn-202. Asp-219 contacts substrate. Glu-221 serves as the catalytic Nucleophile. Residues Asn-222, Asn-223, Gly-296, His-416, Asn-418, Phe-419, Asp-435, His-463, Glu-465, Leu-468, and Asp-488 each coordinate substrate. Residues 336-499 are ABD; sequence GSLVSGPSFT…SFEIETAFAS (164 aa). The cysteines at positions 401 and 439 are disulfide-linked.

Belongs to the glycosyl hydrolase 54 family.

The protein resides in the secreted. It carries out the reaction Hydrolysis of terminal non-reducing alpha-L-arabinofuranoside residues in alpha-L-arabinosides.. It participates in glycan metabolism; L-arabinan degradation. Its function is as follows. Alpha-L-arabinofuranosidase involved in the degradation of arabinoxylan, a major component of plant hemicellulose. Able to hydrolyze 1,5-, 1,3- and 1,2-alpha-linkages not only in L-arabinofuranosyl oligosaccharides, but also in polysaccharides containing terminal non-reducing L-arabinofuranoses in side chains, like L-arabinan, arabinogalactan and arabinoxylan. This chain is Probable alpha-L-arabinofuranosidase B (abfB), found in Aspergillus awamori (Black koji mold).